The following is a 408-amino-acid chain: Secreted mono- and diacylglycerol lipase 2 (408 aa).

The N-terminal stretch at methionine 1–alanine 24 is a signal peptide. Asparagine 177 carries N-linked (GlcNAc...) asparagine glycosylation. Serine 217 (nucleophile) is an active-site residue. Residues aspartate 283 and histidine 374 contribute to the active site.

This sequence belongs to the AB hydrolase superfamily. Lipase family. Class 3 subfamily.

The protein resides in the secreted. The catalysed reaction is a monoacylglycerol + H2O = glycerol + a fatty acid + H(+). The enzyme catalyses a diacylglycerol + H2O = a monoacylglycerol + a fatty acid + H(+). Functionally, secreted mono- and diacylglycerol lipase involved in plant virulence. Has a substrate preference for p-nitrophenyl esters with a carbon chain length of C10 (p-nitrophenyl caprate). This is Secreted mono- and diacylglycerol lipase 2 from Gibberella zeae (strain ATCC MYA-4620 / CBS 123657 / FGSC 9075 / NRRL 31084 / PH-1) (Wheat head blight fungus).